Consider the following 140-residue polypeptide: ATP synthase epsilon chain (140 aa).

It belongs to the ATPase epsilon chain family. In terms of assembly, F-type ATPases have 2 components, CF(1) - the catalytic core - and CF(0) - the membrane proton channel. CF(1) has five subunits: alpha(3), beta(3), gamma(1), delta(1), epsilon(1). CF(0) has three main subunits: a, b and c.

It is found in the cell inner membrane. Produces ATP from ADP in the presence of a proton gradient across the membrane. This chain is ATP synthase epsilon chain, found in Marinobacter nauticus (strain ATCC 700491 / DSM 11845 / VT8) (Marinobacter aquaeolei).